Here is a 112-residue protein sequence, read N- to C-terminus: uncharacterized protein (112 aa).

This is an uncharacterized protein from Dictyostelium discoideum (Social amoeba).